The primary structure comprises 125 residues: Immunoglobulin heavy variable 4-39 (125 aa).

Positions 1–26 (MDLMCKKMKHLWFFLLLVAAPRWVLS) are cleaved as a signal peptide. A framework-1 region spans residues 27–51 (QLQLQESGPGLVKPSETLSLTCTVS). The 99-residue stretch at 27 to 125 (QLQLQESGPG…ADTAVYYCAR (99 aa)) folds into the Ig-like domain. Residues Cys48 and Cys123 are joined by a disulfide bond. The segment at 52–61 (GGSISSSSYY) is complementarity-determining-1. Residues 62–78 (WGWIRQPPGKGLEWIGS) are framework-2. The tract at residues 79–85 (IYYSGST) is complementarity-determining-2. The segment at 86-123 (YYNPSLKSRVTISVDTSKNQFSLKLSSVTAADTAVYYC) is framework-3. The segment at 124-125 (AR) is complementarity-determining-3.

Immunoglobulins are composed of two identical heavy chains and two identical light chains; disulfide-linked.

The protein resides in the secreted. Its subcellular location is the cell membrane. Functionally, v region of the variable domain of immunoglobulin heavy chains that participates in the antigen recognition. Immunoglobulins, also known as antibodies, are membrane-bound or secreted glycoproteins produced by B lymphocytes. In the recognition phase of humoral immunity, the membrane-bound immunoglobulins serve as receptors which, upon binding of a specific antigen, trigger the clonal expansion and differentiation of B lymphocytes into immunoglobulins-secreting plasma cells. Secreted immunoglobulins mediate the effector phase of humoral immunity, which results in the elimination of bound antigens. The antigen binding site is formed by the variable domain of one heavy chain, together with that of its associated light chain. Thus, each immunoglobulin has two antigen binding sites with remarkable affinity for a particular antigen. The variable domains are assembled by a process called V-(D)-J rearrangement and can then be subjected to somatic hypermutations which, after exposure to antigen and selection, allow affinity maturation for a particular antigen. The protein is Immunoglobulin heavy variable 4-39 of Homo sapiens (Human).